The primary structure comprises 495 residues: Carotenoid 3,4-desaturase (495 aa).

Belongs to the carotenoid/retinoid oxidoreductase family.

It carries out the reaction dihydroisopentenyldehydrorhodopin + A = isopentenyldehydrorhodopin + AH2. It catalyses the reaction dihydrobisanhydrobacterioruberin + A = bisanhydrobacterioruberin + AH2. It participates in carotenoid biosynthesis. Functionally, involved in the biosynthesis of the acyclic C50 carotenoid bacterioruberin (BR). CrtD is involved in the desaturation reactions that form double bonds at C-3,4 of dihydroisopentenyldehydrorhodopin (DH-IDR) and C-3',4' of dihydrobisanhydrobacterioruberin (DH-BABR) to yield isopentenyld ehydrorhodopin (IDR) and bisanhydrobacterioruberin (BABR), respectively. This Haloarcula japonica (strain ATCC 49778 / DSM 6131 / JCM 7785 / NBRC 101032 / NCIMB 13157 / TR-1) protein is Carotenoid 3,4-desaturase.